Here is a 175-residue protein sequence, read N- to C-terminus: Large ribosomal subunit protein uL10 (175 aa).

The protein belongs to the universal ribosomal protein uL10 family. Part of the ribosomal stalk of the 50S ribosomal subunit. The N-terminus interacts with L11 and the large rRNA to form the base of the stalk. The C-terminus forms an elongated spine to which L12 dimers bind in a sequential fashion forming a multimeric L10(L12)X complex.

Its function is as follows. Forms part of the ribosomal stalk, playing a central role in the interaction of the ribosome with GTP-bound translation factors. The chain is Large ribosomal subunit protein uL10 from Delftia acidovorans (strain DSM 14801 / SPH-1).